Here is a 308-residue protein sequence, read N- to C-terminus: Ribosomal RNA small subunit methyltransferase H (308 aa).

Residues G36–H38, D55, F86, D103, and Q110 each bind S-adenosyl-L-methionine.

Belongs to the methyltransferase superfamily. RsmH family.

Its subcellular location is the cytoplasm. It catalyses the reaction cytidine(1402) in 16S rRNA + S-adenosyl-L-methionine = N(4)-methylcytidine(1402) in 16S rRNA + S-adenosyl-L-homocysteine + H(+). In terms of biological role, specifically methylates the N4 position of cytidine in position 1402 (C1402) of 16S rRNA. The protein is Ribosomal RNA small subunit methyltransferase H of Helicobacter pylori (strain Shi470).